A 295-amino-acid chain; its full sequence is Non-selective voltage-gated ion channel VDAC2 (295 aa).

Residues K24 and K32 each contribute to the ATP site. An N6-acetyllysine; alternate modification is found at K32. The residue at position 32 (K32) is an N6-succinyllysine; alternate. K32 participates in a covalent cross-link: Glycyl lysine isopeptide (Lys-Gly) (interchain with G-Cter in ubiquitin); alternate. A run of 2 beta stranded transmembrane segments spans residues L38 to T45 and V51 to N60. K65 participates in a covalent cross-link: Glycyl lysine isopeptide (Lys-Gly) (interchain with G-Cter in ubiquitin). The beta stranded transmembrane segment at V66–W76 threads the bilayer. The residue at position 79 (Y79) is a Phosphotyrosine. Beta stranded transmembrane passes span L81–N88, T92–E100, and L107–S116. T119 is modified (phosphothreonine). Residue K121 is modified to N6-acetyllysine; alternate. K121 participates in a covalent cross-link: Glycyl lysine isopeptide (Lys-Gly) (interchain with G-Cter in ubiquitin); alternate. K122 is covalently cross-linked (Glycyl lysine isopeptide (Lys-Gly) (interchain with G-Cter in ubiquitin)). Beta stranded transmembrane passes span K122–K131, I135–D144, P148–G157, and W161–D170. A Glycyl lysine isopeptide (Lys-Gly) (interchain with G-Cter in ubiquitin) cross-link involves residue K173. Transmembrane regions (beta stranded) follow at residues T177 to T187, F190 to N197, E201 to V210, F214 to W222, T229 to Q238, and A243 to N250. S252 carries the post-translational modification Phosphoserine. NAD(+) is bound by residues L254–G256 and S272–D276. A run of 2 beta stranded transmembrane segments spans residues L254–L263 and V267–V275. The residue at position 278 (K278) is an N6-acetyllysine; alternate. A Glycyl lysine isopeptide (Lys-Gly) (interchain with G-Cter in ubiquitin); alternate cross-link involves residue K278. Residues H285–A295 traverse the membrane as a beta stranded segment.

This sequence belongs to the eukaryotic mitochondrial porin family. In terms of assembly, monomer, homodimer and higher order oligomers; formation of higher order structures is necessary for scramblase activity. Interacts with ARMC12 in a TBC1D21-dependent manner. Interacts with KLC3. Interacts with SPATA33. Interacts with PPP3CC in a SPATA33-dependent manner. Ubiquitinated by PRKN during mitophagy, leading to its degradation and enhancement of mitophagy. Deubiquitinated by USP30. Highest levels of expression detected in testis, less but still abundant expression in heart, kidney, brain, and skeletal muscle. Expressed in the sperm midpiece (at protein level).

It localises to the mitochondrion outer membrane. Its subcellular location is the membrane. It catalyses the reaction chloride(in) = chloride(out). It carries out the reaction K(+)(in) = K(+)(out). The enzyme catalyses a 1,2-diacyl-sn-glycero-3-phospho-L-serine(in) = a 1,2-diacyl-sn-glycero-3-phospho-L-serine(out). The catalysed reaction is a 1,2-diacyl-sn-glycero-3-phosphocholine(in) = a 1,2-diacyl-sn-glycero-3-phosphocholine(out). It catalyses the reaction a 1,2-diacyl-sn-glycero-3-phospho-(1D-myo-inositol)(in) = a 1,2-diacyl-sn-glycero-3-phospho-(1D-myo-inositol)(out). Functionally, non-selective voltage-gated ion channel that mediates the transport of anions and cations through the mitochondrion outer membrane and plasma membrane. The channel adopts an open conformation at zero mV and a closed conformation at both positive and negative potentials. There are two populations of channels; the main that functions in a lower open-state conductance with lower ion selectivity, that switch, in a voltage-dependent manner, from the open to a low-conducting 'closed' state and the other that has a normal ion selectivity in the typical high conductance, 'open' state. Binds various lipids, including the sphingolipid ceramide, the phospholipid phosphatidylcholine, and the sterols cholesterol and oxysterol. Binding of ceramide promotes the mitochondrial outer membrane permeabilization (MOMP) apoptotic pathway. In terms of biological role, catalyzes the scrambling of phospholipids across the outer mitochondrial membrane; the mechanism is unrelated to channel activity and is capable of translocating both anionic and zwitterionic phospholipids. The polypeptide is Non-selective voltage-gated ion channel VDAC2 (Mus musculus (Mouse)).